We begin with the raw amino-acid sequence, 245 residues long: Probable GTP-binding protein EngB (245 aa).

One can recognise an EngB-type G domain in the interval 46 to 223; that stretch reads DVPEIAFVGR…AQHLWDWAHP (178 aa). Residues 54-61, 81-85, 103-106, 173-176, and 202-204 each bind GTP; these read GRSNAGKS, GRTQS, DLPG, TKSD, and FSS. Residues serine 61 and threonine 83 each contribute to the Mg(2+) site. The disordered stretch occupies residues 219-245; sequence DWAHPPEKPAKKPKAEPAAEAATGDEG. A compositionally biased stretch (basic and acidic residues) spans 222-235; it reads HPPEKPAKKPKAEP. Residues 236–245 show a composition bias toward low complexity; that stretch reads AAEAATGDEG.

This sequence belongs to the TRAFAC class TrmE-Era-EngA-EngB-Septin-like GTPase superfamily. EngB GTPase family. Requires Mg(2+) as cofactor.

Functionally, necessary for normal cell division and for the maintenance of normal septation. This is Probable GTP-binding protein EngB from Polaromonas sp. (strain JS666 / ATCC BAA-500).